The following is a 451-amino-acid chain: Gamma-aminobutyric acid receptor subunit alpha-2 (451 aa).

The N-terminal stretch at 1-28 (MKTKLNIYNMQLLLFVFLVWDPARLVLA) is a signal peptide. At 29-249 (NIQEDEAKNN…MTAHFHLKRK (221 aa)) the chain is on the extracellular side. An N-linked (GlcNAc...) asparagine glycan is attached at Asn38. Residue Arg94 participates in 4-aminobutanoate binding. Asn138 carries N-linked (GlcNAc...) asparagine glycosylation. Residue Thr157 participates in 4-aminobutanoate binding. Cys166 and Cys180 form a disulfide bridge. Residues 250-270 (IGYFVIQTYLPCIMTVILSQV) form a helical membrane-spanning segment. The Cytoplasmic segment spans residues 271-280 (SFWLNRESVP). A helical membrane pass occupies residues 281–300 (ARTVFGVTTVLTMTTLSISA). Topologically, residues 301–311 (RNSLPKVAYAT) are extracellular. A helical membrane pass occupies residues 312–332 (AMDWFIAVCYAFVFSALIEFA). The Cytoplasmic segment spans residues 333–420 (TVNYFTKRGW…FNSVSKIDRM (88 aa)). Residues 421 to 441 (SRIVFPVLFGTFNLVYWATYL) traverse the membrane as a helical segment. Topologically, residues 442–451 (NREPVLGVSP) are extracellular.

The protein belongs to the ligand-gated ion channel (TC 1.A.9) family. Gamma-aminobutyric acid receptor (TC 1.A.9.5) subfamily. GABRA2 sub-subfamily. Heteropentamer, formed by a combination of alpha (GABRA1-6), beta (GABRB1-3), gamma (GABRG1-3), delta (GABRD), epsilon (GABRE), rho (GABRR1-3), pi (GABRP) and theta (GABRQ) subunits, each subunit exhibiting distinct physiological and pharmacological properties. Interacts with UBQLN1. Interacts with KIF21B. Interacts with LHFPL4. Interacts with SHISA7; interaction leads to the regulation of GABA(A) receptor trafficking, channel deactivation kinetics and pharmacology. In terms of processing, glycosylated.

It localises to the postsynaptic cell membrane. The protein localises to the cell membrane. It is found in the cytoplasmic vesicle membrane. The protein resides in the cell projection. Its subcellular location is the dendrite. It carries out the reaction chloride(in) = chloride(out). Its activity is regulated as follows. Activated by pentobarbital. Inhibited by the antagonist bicuculline. In terms of biological role, alpha subunit of the heteropentameric ligand-gated chloride channel gated by gamma-aminobutyric acid (GABA), a major inhibitory neurotransmitter in the brain. GABA-gated chloride channels, also named GABA(A) receptors (GABAAR), consist of five subunits arranged around a central pore and contain GABA active binding site(s) located at the alpha and beta subunit interface(s). When activated by GABA, GABAARs selectively allow the flow of chloride anions across the cell membrane down their electrochemical gradient. Chloride influx into the postsynaptic neuron following GABAAR opening decreases the neuron ability to generate a new action potential, thereby reducing nerve transmission. The alpha-2 subunit exhibits synaptogenic activity together with beta-2 and very little to no activity together with beta-3, the gamma-2 subunit being necessary but not sufficient to induce rapid synaptic contacts formation. The sequence is that of Gamma-aminobutyric acid receptor subunit alpha-2 (GABRA2) from Pongo abelii (Sumatran orangutan).